The primary structure comprises 237 residues: Aspartate/glutamate leucyltransferase (237 aa).

Belongs to the R-transferase family. Bpt subfamily.

The protein resides in the cytoplasm. It catalyses the reaction N-terminal L-glutamyl-[protein] + L-leucyl-tRNA(Leu) = N-terminal L-leucyl-L-glutamyl-[protein] + tRNA(Leu) + H(+). The catalysed reaction is N-terminal L-aspartyl-[protein] + L-leucyl-tRNA(Leu) = N-terminal L-leucyl-L-aspartyl-[protein] + tRNA(Leu) + H(+). Functions in the N-end rule pathway of protein degradation where it conjugates Leu from its aminoacyl-tRNA to the N-termini of proteins containing an N-terminal aspartate or glutamate. The polypeptide is Aspartate/glutamate leucyltransferase (Marinobacter nauticus (strain ATCC 700491 / DSM 11845 / VT8) (Marinobacter aquaeolei)).